The sequence spans 330 residues: Methylthioribose-1-phosphate isomerase (330 aa).

Substrate-binding positions include 49 to 51 (RGA), Arg83, and Gln179. Asp220 acts as the Proton donor in catalysis. 230-231 (NK) contacts substrate.

It belongs to the eIF-2B alpha/beta/delta subunits family. MtnA subfamily.

The enzyme catalyses 5-(methylsulfanyl)-alpha-D-ribose 1-phosphate = 5-(methylsulfanyl)-D-ribulose 1-phosphate. The protein operates within amino-acid biosynthesis; L-methionine biosynthesis via salvage pathway; L-methionine from S-methyl-5-thio-alpha-D-ribose 1-phosphate: step 1/6. Functionally, catalyzes the interconversion of methylthioribose-1-phosphate (MTR-1-P) into methylthioribulose-1-phosphate (MTRu-1-P). The chain is Methylthioribose-1-phosphate isomerase from Thermus thermophilus (strain ATCC BAA-163 / DSM 7039 / HB27).